The chain runs to 469 residues: Hydrogen cyanide synthase subunit HcnB (469 aa).

In terms of assembly, heterotrimer of HcnA, HcnB and HcnC.

It localises to the cell membrane. The enzyme catalyses glycine + 2 A = hydrogen cyanide + 2 AH2 + CO2. In terms of biological role, a three-component membrane-bound flavoenzyme that catalyzes the formation of hydrogen cyanide, a secondary metabolite, by transfer of electrons to a cyanide-resistant branch of the aerobic respiratory chain. Contributes to suppression of black root rot of tobacco. The chain is Hydrogen cyanide synthase subunit HcnB from Pseudomonas protegens (strain DSM 19095 / LMG 27888 / CFBP 6595 / CHA0).